The sequence spans 1134 residues: Phytochrome 1 (1134 aa).

One can recognise a GAF domain in the interval 219–401 (DIGLLCDTVV…VFGLQLNMEA (183 aa)). Cys324 is a binding site for phytochromobilin. The PAS 1 domain occupies 616–687 (VANEMVRLIE…RLLYLALQGD (72 aa)). The PAC domain occupies 690 to 746 (QNVELKLKTFGGQKDKEAVILVVNACASRDVSDNVVGVCFVGQDVTGQKVVMDKFTR). The 72-residue stretch at 750-821 (DYKAIVQNPN…KGQDAVTKFM (72 aa)) folds into the PAS 2 domain. Residues 901–1121 (YIRQEIKNPL…LVSLELPLAQ (221 aa)) form the Histidine kinase domain.

This sequence belongs to the phytochrome family. As to quaternary structure, homodimer. Post-translationally, contains one covalently linked phytochromobilin chromophore.

In terms of biological role, regulatory photoreceptor which exists in two forms that are reversibly interconvertible by light: the Pr form that absorbs maximally in the red region of the spectrum and the Pfr form that absorbs maximally in the far-red region. Photoconversion of Pr to Pfr induces an array of morphogenic responses, whereas reconversion of Pfr to Pr cancels the induction of those responses. Pfr controls the expression of a number of nuclear genes including those encoding the small subunit of ribulose-bisphosphate carboxylase, chlorophyll A/B binding protein, protochlorophyllide reductase, rRNA, etc. It also controls the expression of its own gene(s) in a negative feedback fashion. The protein is Phytochrome 1 (PHY1) of Selaginella martensii (Martens's spike moss).